Consider the following 955-residue polypeptide: Leucine--tRNA ligase (955 aa).

The short motif at 51 to 61 is the 'HIGH' region element; it reads PYLNGVLHAGH. The short motif at 647-651 is the 'KMSKS' region element; sequence KLSKS. An ATP-binding site is contributed by Lys-650.

The protein belongs to the class-I aminoacyl-tRNA synthetase family.

It localises to the cytoplasm. It catalyses the reaction tRNA(Leu) + L-leucine + ATP = L-leucyl-tRNA(Leu) + AMP + diphosphate. The chain is Leucine--tRNA ligase from Methanococcus maripaludis (strain C5 / ATCC BAA-1333).